Here is a 57-residue protein sequence, read N- to C-terminus: UPF0391 membrane protein IL0696 (57 aa).

Transmembrane regions (helical) follow at residues 4-24 and 28-48; these read WVLI…GGIA and AGIA…SLVV.

It belongs to the UPF0391 family.

It is found in the cell membrane. This is UPF0391 membrane protein IL0696 from Idiomarina loihiensis (strain ATCC BAA-735 / DSM 15497 / L2-TR).